Reading from the N-terminus, the 478-residue chain is Pentraxin-4 (478 aa).

A signal peptide spans 1-25; sequence MGCSWRKTLSFFLVFVPIYLHGASS. N-linked (GlcNAc...) asparagine glycosylation is found at N67 and N91. Residues 208–222 show a composition bias toward basic and acidic residues; that stretch reads RDRQELRAASEHRGP. The disordered stretch occupies residues 208 to 262; that stretch reads RDRQELRAASEHRGPPQDSSAPLQGRREPPASGSHRVLSGTAPKDPRQQAWSPQV. The Pentraxin (PTX) domain occupies 269–473; that stretch reads VGPTLVFPNA…GFVQGANCTC (205 aa). A disulfide bond links C300 and C364. Ca(2+)-binding residues include D322, N323, E406, Q407, and D408.

It depends on Ca(2+) as a cofactor. As to expression, widely expressed at low levels with highest levels in small intestine, testis and brain. Very low expression in endothelial cells, monocytes, neutrophils and lymphocytes. Isoform 1 is not expressed in small intestine.

Its subcellular location is the secreted. The protein is Pentraxin-4 (PTX4) of Homo sapiens (Human).